Consider the following 115-residue polypeptide: MALDPEIASRLKRNADGLFTAVAQERGTGQVLMVAWMDDIALDRTMRTRNATYWSRSRGEHWVKGETSGHTQHVHSVRLDCDGDTVLLEVEQSGPACHTGTHTCFDADVLLAPEA.

A Mg(2+)-binding site is contributed by Asp-80. Cys-81 serves as a coordination point for Zn(2+). Mg(2+) is bound by residues Asp-82 and Asp-84. Residues Cys-97 and Cys-104 each coordinate Zn(2+).

It belongs to the PRA-CH family. In terms of assembly, homodimer. It depends on Mg(2+) as a cofactor. The cofactor is Zn(2+).

Its subcellular location is the cytoplasm. The enzyme catalyses 1-(5-phospho-beta-D-ribosyl)-5'-AMP + H2O = 1-(5-phospho-beta-D-ribosyl)-5-[(5-phospho-beta-D-ribosylamino)methylideneamino]imidazole-4-carboxamide. It functions in the pathway amino-acid biosynthesis; L-histidine biosynthesis; L-histidine from 5-phospho-alpha-D-ribose 1-diphosphate: step 3/9. In terms of biological role, catalyzes the hydrolysis of the adenine ring of phosphoribosyl-AMP. The chain is Phosphoribosyl-AMP cyclohydrolase from Mycobacterium sp. (strain MCS).